The chain runs to 311 residues: Cytosolic Fe-S cluster assembly factor Nubp1 homolog (311 aa).

Residues Cys-9, Cys-23, Cys-26, and Cys-32 each coordinate [4Fe-4S] cluster. ATP is bound at residue Gly-63–Ser-70. [4Fe-4S] cluster-binding residues include Cys-240 and Cys-243.

Belongs to the Mrp/NBP35 ATP-binding proteins family. NUBP1/NBP35 subfamily. Heterotetramer of 2 Nubp1 and 2 Nubp2 chains. The cofactor is [4Fe-4S] cluster.

It localises to the cytoplasm. In terms of biological role, component of the cytosolic iron-sulfur (Fe/S) protein assembly (CIA) machinery. Required for maturation of extramitochondrial Fe-S proteins. The Nubp1-Nubp2 heterotetramer forms a Fe-S scaffold complex, mediating the de novo assembly of an Fe-S cluster and its transfer to target apoproteins. This chain is Cytosolic Fe-S cluster assembly factor Nubp1 homolog, found in Drosophila pseudoobscura pseudoobscura (Fruit fly).